The chain runs to 781 residues: N-acetylneuraminate (7)9-O-acetyltransferase (781 aa).

Topologically, residues 1–15 are cytoplasmic; that stretch reads MAVLAYNLGKREINQ. The helical transmembrane segment at 16-36 threads the bilayer; sequence YFSIKNAKLLAAAAVVLLTVF. The Lumenal segment spans residues 37 to 308; sequence HAASRHYGSS…SAPPLSVLQK (272 aa). The active-site Acyl-ester intermediate is the serine 94. N-linked (GlcNAc...) asparagine glycans are attached at residues asparagine 139, asparagine 185, and asparagine 239. Active-site residues include aspartate 264 and histidine 267. A helical transmembrane segment spans residues 309–329; that stretch reads LAAAVLLVSVVCFVLLGFSSH. The segment at 330–350 is disordered; the sequence is RKSRPAPDVESGEEKKHPAAV. Residues 330-354 lie on the Cytoplasmic side of the membrane; the sequence is RKSRPAPDVESGEEKKHPAAVGQLN. The helical transmembrane segment at 355–375 threads the bilayer; that stretch reads PKGPLLAIGKMSLIMLYFYLC. Residues 376-386 are Lumenal-facing; it reads DRADIFMKEQK. The helical transmembrane segment at 387 to 407 threads the bilayer; it reads FYTHSAFFIPLIYIFVLGVFY. The Cytoplasmic segment spans residues 408 to 430; it reads SENSKETKLLNREQTDEWKGWMQ. The helical transmembrane segment at 431–451 threads the bilayer; sequence LVILIYHISGASAFIPVYMHV. Arginine 452 is a topological domain (lumenal). Residues 453 to 473 traverse the membrane as a helical segment; sequence VLVAAYLFQTGYGHFSFFWLK. Over 474–477 the chain is Cytoplasmic; sequence GDFG. Residues 478–498 form a helical membrane-spanning segment; sequence LYRVCQVLFRLNFLVVVLCLV. At 499-504 the chain is on the lumenal side; the sequence is MDRPYQ. A helical membrane pass occupies residues 505 to 525; sequence FYYFVPLVTFWFAVIYATMAL. At 526-537 the chain is on the cytoplasmic side; it reads WPQILQKQANGS. Residues 538–558 traverse the membrane as a helical segment; that stretch reads AFWNLALLLKLLGLLLFIGFF. The Lumenal segment spans residues 559–595; it reads AYSQELFEGIFSVWPLSKLFELQGSIHEWWFRWKLDR. Residues 596 to 616 form a helical membrane-spanning segment; the sequence is FAVVNGMLFAFIYLLLQKYQL. At 617-629 the chain is on the cytoplasmic side; sequence LSEGKGEPLFSNK. A helical transmembrane segment spans residues 630 to 650; sequence ISNCLLFVSVVSFMTYSIWAS. Residues 651–660 are Lumenal-facing; the sequence is GCKNKSECNE. A glycan (N-linked (GlcNAc...) asparagine) is linked at asparagine 654. A helical membrane pass occupies residues 661 to 681; that stretch reads MHPYISVILAFILIRNIPGYA. The Cytoplasmic segment spans residues 682-687; that stretch reads RSLYSS. Residues 688-708 form a helical membrane-spanning segment; sequence FFAWFGKISLELFICQYHIWL. Residues 709 to 714 lie on the Lumenal side of the membrane; that stretch reads AADTKG. A helical membrane pass occupies residues 715–735; sequence ILVLIPGNPTLNIIVSTFIFV. The Cytoplasmic portion of the chain corresponds to 736–756; sequence CVAHEISQITNDLAQVAIPKE. A helical membrane pass occupies residues 757-777; that stretch reads SGPLLKRLLGAGVFLVLVLTL. The Lumenal portion of the chain corresponds to 778–781; that stretch reads SQKD.

Belongs to the PC-esterase family. CASD1 subfamily.

It localises to the golgi apparatus membrane. The catalysed reaction is CMP-N-acetyl-beta-neuraminate + acetyl-CoA = CMP-N-acetyl-9-O-acetyl-beta-neuraminate + CoA. The enzyme catalyses a ganglioside GD3 (d18:1(4E)) + acetyl-CoA = a ganglioside Ac-O-7-GD3(d18:1(4E)) + CoA. It catalyses the reaction CMP-N-acetyl-beta-neuraminate + acetyl-CoA = CMP-N-acetyl-7-O-acetyl-beta-neuraminate + CoA. Functionally, key enzyme in the biosynthesis of O-acetylated (O-Ac) sialoglycans such as gangliosides O-AcGD3 and O-AcGD2, which affect various processes such as cell-cell interactions, host-pathogen recognition. Catalyzes the transfer of an acetyl group from a donor, the acetyl-coenzyme-A molecule (acetyl-CoA), to the C7/8/9 OH-position of a sialic acid residue. The primary site of O-acetyl group transfer on sialic acid seems to depend on cell type and can be C7, from which the O-acetyl group could subsequently migrate to the C8 and then to the C9 position, or at C9 with possibility of migrating to the C8 and then to the C7 position. Together with ST8SIA1 (GD3 synthase) it increases the levels of ganglioside Ac-O-7-GD3. Can transfer the acetyl group from acetyl-CoA to free sialate (N-acetylneuraminate, Neu5Ac) in vitro, but has preferred substrate specificity for CMP-activated sialate (CMP-Neu5Ac), resulting in the formation of 9-O-acetylated CMP-Neu5Ac (CMP-Neu5,9Ac2). CMP-Neu5,9Ac2 may be used by sialyltransferases as a sialate donor for glycoconjugate acceptors such as ganglioside GD3. O-acetylation at position C9 of ganglioside GD3 can counteract the pro-apoptotic effects of the ganglioside GD3 in tumor cells. In Danio rerio (Zebrafish), this protein is N-acetylneuraminate (7)9-O-acetyltransferase.